Here is a 500-residue protein sequence, read N- to C-terminus: Transcription termination/antitermination protein NusA (500 aa).

Positions 135–205 constitute an S1 motif domain; the sequence is GEIVTGVVKK…RGAQLFVTRS (71 aa). A KH domain is found at 307 to 373; the sequence is KHTMDIAVEA…FTKYLDIDEE (67 aa). Repeat copies occupy residues 369-419 and 444-494. The segment at 369-494 is 2 X 51 AA approximate repeats; the sequence is DIDEEFATVL…ELIMAARNIC (126 aa).

It belongs to the NusA family. In terms of assembly, monomer. Binds directly to the core enzyme of the DNA-dependent RNA polymerase and to nascent RNA.

The protein localises to the cytoplasm. Participates in both transcription termination and antitermination. This is Transcription termination/antitermination protein NusA from Salmonella typhimurium (strain LT2 / SGSC1412 / ATCC 700720).